An 897-amino-acid chain; its full sequence is MSNEESFTEKPLKKRSRAHRLGDPRFYCTYPDCPKSFTRKEHLRRHERTHENVKAFSCSFCNRAFARSDVLNRHVQQMHLQKQNLSERRMLNASCFLGFCVLAHDYVNLINARHFMIEHFLSLFAFCRTILFSLLTSFLLVPPPQFFHSEAGERPTPSVGAPSSLASSMDSVRVAPSMLAASHQIVPQYSENNPRVSNEPPRVTIENASLKPFSGYIKSHMSTSNFLNGEPDLNVNVDLSPFPNLPATVPITQAASTANAFQQPSNQFQTQKLPSGLDTRPVSSYPDELTQLESNPDSFSRLDLQGDCTCIFKNRSSIASSRTMDDVVRWLFSSGKRRQKYESSYPYQTQSNQIPSQDQYSDTDSNFLSYYFSASGPMYVPQKCPATVYNNLLNFLEGSFHLQPNFLAMFTLESVSSWLNAYWSMFHVRWPILHRGTFQITQAPLDLLLSMITLGMHSSNDLSIRSLAVEIHTTLRYNIYQKQEFGPPVSLWVYQALFLIQVFELFTSNLKQHRLAQMFHPVLIEAMRQAIPSDALTVRSETFGESNTPLTLQQWHKWITRESVKRIAFFVFALDSTSTLVFGNQPLLYVTDVSMPLLAEEHHWEAENFEVWAAQKPTIEPPTILHMLKAFVQCEQCESPLPKLSPWNMLLLLHGLLSVDISLKQKKFVPGMKLSKREIDGWCSLVFEAYQKWNRCYYSIFLNNNILPFGHPFVKECRSLYNLACIYSKTRLTYLQAFAKAVTDPVDGSVTSKTVAPLRYVKIWANTENARYSTSNALEILDMLLREKIESAPRYDTLIYHSWCYYVAALVLWSIGFALDEENKKTEEVTNLHSQMSRYVTKVRQALEQGEPLFAVVEKSKNPIILHVVLQALDVFPWDLLGEHKKIIQQLLSKGND.

C2H2-type zinc fingers lie at residues 26–50 (FYCT…ERTH) and 56–79 (FSCS…QQMH). A C2H2-type 3; atypical zinc finger spans residues 93 to 119 (ASCFLGFCVLAHDYVNLINARHFMIEH).

It is found in the nucleus. This is Zinc finger protein zas1 (zas1) from Schizosaccharomyces pombe (strain 972 / ATCC 24843) (Fission yeast).